The chain runs to 819 residues: Putative U-box domain-containing protein 53 (819 aa).

2 disordered regions span residues 208–309 and 398–433; these read TSDT…NPQF and KETE…KEKL. Residues 223–237 show a composition bias toward low complexity; the sequence is ERTSSSCSSGSGANS. Positions 238-260 are enriched in polar residues; sequence DVMSNALKSNPHTLSNKRMQNLP. The span at 278–296 shows a compositional bias: basic and acidic residues; it reads DETKKRSSDAAEEASKRSS. Over residues 297–307 the composition is skewed to polar residues; the sequence is PETSRSVSWNP. Residues 395-437 are a coiled coil; it reads IAKKETEKFEQKRREEREAAQRREAEMKATHEAKEKEKLEESS. Positions 460–728 constitute a Protein kinase domain; that stretch reads FSEDLKIGMG…DLEDQILPVL (269 aa). ATP-binding positions include 466–474 and lysine 487; that span reads IGMGAYGDV. Catalysis depends on aspartate 582, which acts as the Proton acceptor. The U-box domain occupies 748–819; the sequence is QPPSHFFCPL…AIVEWRNRNQ (72 aa).

Belongs to the protein kinase superfamily. Ser/Thr protein kinase family.

The catalysed reaction is L-seryl-[protein] + ATP = O-phospho-L-seryl-[protein] + ADP + H(+). It carries out the reaction L-threonyl-[protein] + ATP = O-phospho-L-threonyl-[protein] + ADP + H(+). It catalyses the reaction S-ubiquitinyl-[E2 ubiquitin-conjugating enzyme]-L-cysteine + [acceptor protein]-L-lysine = [E2 ubiquitin-conjugating enzyme]-L-cysteine + N(6)-ubiquitinyl-[acceptor protein]-L-lysine.. It functions in the pathway protein modification; protein ubiquitination. In terms of biological role, functions as an E3 ubiquitin ligase. This is Putative U-box domain-containing protein 53 (PUB53) from Arabidopsis thaliana (Mouse-ear cress).